Consider the following 428-residue polypeptide: Enolase (428 aa).

Glutamine 163 lines the (2R)-2-phosphoglycerate pocket. Residue glutamate 205 is the Proton donor of the active site. Mg(2+)-binding residues include aspartate 242, glutamate 283, and aspartate 310. Residues lysine 335, arginine 364, serine 365, and lysine 386 each coordinate (2R)-2-phosphoglycerate. Lysine 335 (proton acceptor) is an active-site residue.

Belongs to the enolase family. The cofactor is Mg(2+).

The protein resides in the cytoplasm. It localises to the secreted. Its subcellular location is the cell surface. It catalyses the reaction (2R)-2-phosphoglycerate = phosphoenolpyruvate + H2O. Its pathway is carbohydrate degradation; glycolysis; pyruvate from D-glyceraldehyde 3-phosphate: step 4/5. Its function is as follows. Catalyzes the reversible conversion of 2-phosphoglycerate (2-PG) into phosphoenolpyruvate (PEP). It is essential for the degradation of carbohydrates via glycolysis. The protein is Enolase of Streptomyces avermitilis (strain ATCC 31267 / DSM 46492 / JCM 5070 / NBRC 14893 / NCIMB 12804 / NRRL 8165 / MA-4680).